An 80-amino-acid chain; its full sequence is Translation initiation factor IF-1, chloroplastic (80 aa).

Positions 1-74 constitute an S1-like domain; it reads MKEQKWIHEG…TRGRIIYRLR (74 aa).

The protein belongs to the IF-1 family. As to quaternary structure, component of the 30S ribosomal translation pre-initiation complex which assembles on the 30S ribosome in the order IF-2 and IF-3, IF-1 and N-formylmethionyl-tRNA(fMet); mRNA recruitment can occur at any time during PIC assembly.

Its subcellular location is the plastid. The protein localises to the chloroplast. One of the essential components for the initiation of protein synthesis. Stabilizes the binding of IF-2 and IF-3 on the 30S subunit to which N-formylmethionyl-tRNA(fMet) subsequently binds. Helps modulate mRNA selection, yielding the 30S pre-initiation complex (PIC). Upon addition of the 50S ribosomal subunit IF-1, IF-2 and IF-3 are released leaving the mature 70S translation initiation complex. This is Translation initiation factor IF-1, chloroplastic from Illicium oligandrum (Star anise).